Here is a 203-residue protein sequence, read N- to C-terminus: Peptide deformylase (203 aa).

Fe cation-binding residues include cysteine 121 and histidine 163. Residue glutamate 164 is part of the active site. Histidine 167 serves as a coordination point for Fe cation.

The protein belongs to the polypeptide deformylase family. Requires Fe(2+) as cofactor.

It catalyses the reaction N-terminal N-formyl-L-methionyl-[peptide] + H2O = N-terminal L-methionyl-[peptide] + formate. Functionally, removes the formyl group from the N-terminal Met of newly synthesized proteins. Requires at least a dipeptide for an efficient rate of reaction. N-terminal L-methionine is a prerequisite for activity but the enzyme has broad specificity at other positions. This chain is Peptide deformylase, found in Prochlorococcus marinus (strain MIT 9515).